The chain runs to 428 residues: Gamma-glutamyl phosphate reductase (428 aa).

The protein belongs to the gamma-glutamyl phosphate reductase family.

It localises to the cytoplasm. The catalysed reaction is L-glutamate 5-semialdehyde + phosphate + NADP(+) = L-glutamyl 5-phosphate + NADPH + H(+). It participates in amino-acid biosynthesis; L-proline biosynthesis; L-glutamate 5-semialdehyde from L-glutamate: step 2/2. In terms of biological role, catalyzes the NADPH-dependent reduction of L-glutamate 5-phosphate into L-glutamate 5-semialdehyde and phosphate. The product spontaneously undergoes cyclization to form 1-pyrroline-5-carboxylate. This is Gamma-glutamyl phosphate reductase from Picosynechococcus sp. (strain ATCC 27264 / PCC 7002 / PR-6) (Agmenellum quadruplicatum).